A 1321-amino-acid polypeptide reads, in one-letter code: Lysine-specific demethylase 3A (1321 aa).

2 positions are modified to phosphoserine: Ser264 and Ser325. Disordered stretches follow at residues 307–336, 383–402, and 438–472; these read ATPP…IPQG, LTEP…QENR, and KHLE…GKKV. A compositionally biased stretch (polar residues) spans 316–327; that stretch reads QQSTPQAANSPP. Ser445 is subject to Phosphoserine. Residues 662–687 form a C6-type zinc finger; that stretch reads CDVCDTTIFNLHWVCPRCGFGVCVDC. Position 766 is a phosphoserine (Ser766). An LXXLL motif motif is present at residues 885-889; it reads LRNLL. At Lys895 the chain carries N6-acetyllysine. The JmjC domain maps to 1058 to 1281; it reads MPSRFDDLMA…HCFWLTQEFR (224 aa). Residues His1120, Asp1122, and His1249 each contribute to the Fe cation site.

This sequence belongs to the JHDM2 histone demethylase family. Interacts with VRK1. Fe(2+) is required as a cofactor.

The protein localises to the cytoplasm. The protein resides in the nucleus. The catalysed reaction is N(6),N(6)-dimethyl-L-lysyl(9)-[histone H3] + 2 2-oxoglutarate + 2 O2 = L-lysyl(9)-[histone H3] + 2 formaldehyde + 2 succinate + 2 CO2. Its function is as follows. Histone demethylase that specifically demethylates 'Lys-9' of histone H3, thereby playing a central role in histone code. Preferentially demethylates mono- and dimethylated H3 'Lys-9' residue, with a preference for dimethylated residue, while it has weak or no activity on trimethylated H3 'Lys-9'. Demethylation of Lys residue generates formaldehyde and succinate. Involved in hormone-dependent transcriptional activation, by participating in recruitment to androgen-receptor target genes, resulting in H3 'Lys-9' demethylation and transcriptional activation. Involved in spermatogenesis by regulating expression of target genes such as PRM1 and TNP1 which are required for packaging and condensation of sperm chromatin. Involved in obesity resistance through regulation of metabolic genes such as PPARA and UCP1. This is Lysine-specific demethylase 3A (KDM3A) from Homo sapiens (Human).